A 282-amino-acid chain; its full sequence is Acyl-CoA-binding domain-containing protein 6 (282 aa).

Polar residues predominate over residues 1–12; it reads MASSFLPSGATT. Residues 1 to 34 form a disordered region; it reads MASSFLPSGATTGDSGGELSSGDDSGDVESLQSP. Low complexity predominate over residues 17–31; it reads GELSSGDDSGDVESL. Position 41 is a phosphoserine (Ser-41). An ACB domain is found at 42–127; it reads LPELFEKAAE…VKKLDPSWNP (86 aa). An acyl-CoA-binding positions include 69–73 and Lys-95; that span reads YARYK. Phosphoserine is present on Ser-106. Residue Tyr-114 coordinates an acyl-CoA. 2 ANK repeats span residues 191–220 and 224–253; these read EGRT…DINC and EGQT…DPTL.

Monomer.

It localises to the cytoplasm. Functionally, binds long-chain acyl-coenzyme A molecules with a strong preference for unsaturated C18:1-CoA, lower affinity for unsaturated C20:4-CoA, and very weak affinity for saturated C16:0-CoA. Does not bind fatty acids. This chain is Acyl-CoA-binding domain-containing protein 6 (ACBD6), found in Bos taurus (Bovine).